The following is a 152-amino-acid chain: Pertussis toxin subunit 4 (152 aa).

The first 42 residues, 1–42 (MLRRFPTRTTAPGQGGARRSRVRALAWLLASGAMTHLSPALA), serve as a signal peptide directing secretion. 2 disulfides stabilise this stretch: cysteine 73-cysteine 93 and cysteine 145-cysteine 151.

In terms of assembly, pertussis toxin contains five different chains, S1-S5. They are organized into 2 functional subunits: A, composed of S1 (which is toxic) and B, containing S2, S3, S5, and two copies of S4 (B binds to the membrane receptors). Dimers of S2-S4 and S3-S4 are held together by S5.

Its subcellular location is the secreted. The protein localises to the host cell membrane. In terms of biological role, PTX oligomer B binds to receptors on the eukaryotic cell surface and facilitates the translocation of the toxic subunit across the cell membrane. This Bordetella parapertussis (strain 12822 / ATCC BAA-587 / NCTC 13253) protein is Pertussis toxin subunit 4 (ptxD).